A 134-amino-acid chain; its full sequence is Ribonuclease VapC40 (134 aa).

The PINc domain occupies 3–126 (APDTSVLVAG…LRAVETYERL (124 aa)). The Mg(2+) site is built by D5 and D98.

This sequence belongs to the PINc/VapC protein family. It depends on Mg(2+) as a cofactor.

In terms of biological role, toxic component of a type II toxin-antitoxin (TA) system. An RNase. Its cognate antitoxin is VapB40. The chain is Ribonuclease VapC40 from Mycobacterium tuberculosis (strain CDC 1551 / Oshkosh).